The primary structure comprises 335 residues: Mitochondrial fission regulator 1 (335 aa).

The transit peptide at 1 to 48 (MIRWFKCFMRMIFEQVGLNMESVLWSSKPYGSSRSIVRKIGTNLSLIQ) directs the protein to the mitochondrion. A coiled-coil region spans residues 134 to 170 (RSTVIANEEAMQKISALENELATLRAQIAKIVILQEQ). Residues 182 to 309 (ASAAVPCVPP…DKVIPKSETN (128 aa)) are necessary and sufficient to promote mitochondrial fission. The tract at residues 219–240 (RKNRKTNSGPIPTENGPKKPEI) is disordered.

This sequence belongs to the MTFR1 family. In terms of tissue distribution, widely expressed in embryonic tissues with higher expression in cartilage and hypertrophic chondrocytes. Specifically expressed in hypertrophic chondrocytes (at protein level).

It is found in the mitochondrion. In terms of biological role, may play a role in mitochondrial aerobic respiration. May also regulate mitochondrial organization and fission. In Gallus gallus (Chicken), this protein is Mitochondrial fission regulator 1 (MTFR1).